The chain runs to 651 residues: Ion-translocating oxidoreductase complex subunit C (651 aa).

2 consecutive 4Fe-4S ferredoxin-type domains span residues 368-398 and 408-437; these read EYAEPEAEQACIRCSSCSDACPVNLMPQQLY and KSEEYALKDCIECGICAYVCPSHIPLIQYF. Residues Cys378, Cys381, Cys384, Cys388, Cys417, Cys420, Cys423, and Cys427 each coordinate [4Fe-4S] cluster. Composition is skewed to basic and acidic residues over residues 465 to 477 and 485 to 513; these read QARMEREEQERKA and ARREELAQTKGEDPVKAALERLKAKKANE. Disordered stretches follow at residues 465–565 and 583–624; these read QARM…QPTD and LAQA…DPKK. Polar residues-rich tracts occupy residues 554 to 564 and 587 to 600; these read VENQEQQTQPT and NSTSEAISNSQTAE. A compositionally biased stretch (basic and acidic residues) spans 602–614; it reads EVEKTKSAVEKTQ.

It belongs to the 4Fe4S bacterial-type ferredoxin family. RnfC subfamily. In terms of assembly, the complex is composed of six subunits: RnfA, RnfB, RnfC, RnfD, RnfE and RnfG. [4Fe-4S] cluster serves as cofactor.

Its subcellular location is the cell inner membrane. Functionally, part of a membrane-bound complex that couples electron transfer with translocation of ions across the membrane. The chain is Ion-translocating oxidoreductase complex subunit C from Haemophilus influenzae (strain PittEE).